Consider the following 740-residue polypeptide: Ribosomal protein S6 kinase alpha-3 (740 aa).

Residues 1 to 38 (MPLAQLADPWQKMAVESPSDSAENGQQIMDEPMGEEEI) are disordered. Residues 18–27 (PSDSAENGQQ) show a composition bias toward polar residues. One can recognise a Protein kinase 1 domain in the interval 68–327 (FELLKVLGQG…VEEIKRHSFF (260 aa)). ATP contacts are provided by residues 74 to 82 (LGQGSFGKV) and K100. The Proton acceptor role is filled by D193. S227 is modified (phosphoserine; by PDPK1). An AGC-kinase C-terminal domain is found at 328–397 (STIDWNKLYR…VAITSDDESQ (70 aa)). T365 is modified (phosphothreonine). S369 and S375 each carry phosphoserine. S386 carries the post-translational modification Phosphoserine; by autocatalysis and MAPKAPK2. S415 carries the post-translational modification Phosphoserine. The region spanning 422-679 (YEVKEDIGVG…AALVLRHPWI (258 aa)) is the Protein kinase 2 domain. ATP contacts are provided by residues 428-436 (IGVGSYSVC) and K451. At Y529 the chain carries Phosphotyrosine; by FGFR3. D539 acts as the Proton acceptor in catalysis. S556 and S715 each carry phosphoserine.

This sequence belongs to the protein kinase superfamily. AGC Ser/Thr protein kinase family. S6 kinase subfamily. As to quaternary structure, forms a complex with either MAPK1/ERK2 or MAPK3/ERK1 in quiescent cells. Transiently dissociates following mitogenic stimulation. Interacts with NFATC4, ETV1/ER81 and FGFR1. Mg(2+) serves as cofactor. Activated by phosphorylation at Ser-227 by PDPK1. Autophosphorylated on Ser-386, as part of the activation process. May be phosphorylated at Thr-365 and Ser-369 by MAPK1/ERK2 and MAPK3/ERK1. Can also be activated via phosphorylation at Ser-386 by MAPKAPK2. Post-translationally, N-terminal myristoylation results in an activated kinase in the absence of added growth factors. Expressed in many tissues, highest levels in skeletal muscle.

It is found in the nucleus. It localises to the cytoplasm. The catalysed reaction is L-seryl-[protein] + ATP = O-phospho-L-seryl-[protein] + ADP + H(+). The enzyme catalyses L-threonyl-[protein] + ATP = O-phospho-L-threonyl-[protein] + ADP + H(+). Upon extracellular signal or mitogen stimulation, phosphorylated at Thr-577 in the C-terminal kinase domain (CTKD) by MAPK1/ERK2 and MAPK3/ERK1. The activated CTKD then autophosphorylates Ser-386, allowing binding of PDPK1, which in turn phosphorylates Ser-227 in the N-terminal kinase domain (NTDK) leading to the full activation of the protein and subsequent phosphorylation of the substrates by the NTKD. Its function is as follows. Serine/threonine-protein kinase that acts downstream of ERK (MAPK1/ERK2 and MAPK3/ERK1) signaling and mediates mitogenic and stress-induced activation of the transcription factors CREB1, ETV1/ER81 and NR4A1/NUR77, regulates translation through RPS6 and EIF4B phosphorylation, and mediates cellular proliferation, survival, and differentiation by modulating mTOR signaling and repressing pro-apoptotic function of BAD and DAPK1. In fibroblast, is required for EGF-stimulated phosphorylation of CREB1 and histone H3 at 'Ser-10', which results in the subsequent transcriptional activation of several immediate-early genes. In response to mitogenic stimulation (EGF and PMA), phosphorylates and activates NR4A1/NUR77 and ETV1/ER81 transcription factors and the cofactor CREBBP. Upon insulin-derived signal, acts indirectly on the transcription regulation of several genes by phosphorylating GSK3B at 'Ser-9' and inhibiting its activity. Phosphorylates RPS6 in response to serum or EGF via an mTOR-independent mechanism and promotes translation initiation by facilitating assembly of the preinitiation complex. In response to insulin, phosphorylates EIF4B, enhancing EIF4B affinity for the EIF3 complex and stimulating cap-dependent translation. Is involved in the mTOR nutrient-sensing pathway by directly phosphorylating TSC2 at 'Ser-1798', which potently inhibits TSC2 ability to suppress mTOR signaling, and mediates phosphorylation of RPTOR, which regulates mTORC1 activity and may promote rapamycin-sensitive signaling independently of the PI3K/AKT pathway. Mediates cell survival by phosphorylating the pro-apoptotic proteins BAD and DAPK1 and suppressing their pro-apoptotic function. Promotes the survival of hepatic stellate cells by phosphorylating CEBPB in response to the hepatotoxin carbon tetrachloride (CCl4). Is involved in cell cycle regulation by phosphorylating the CDK inhibitor CDKN1B, which promotes CDKN1B association with 14-3-3 proteins and prevents its translocation to the nucleus and inhibition of G1 progression. In LPS-stimulated dendritic cells, is involved in TLR4-induced macropinocytosis, and in myeloma cells, acts as effector of FGFR3-mediated transformation signaling, after direct phosphorylation at Tyr-529 by FGFR3. Negatively regulates EGF-induced MAPK1/3 phosphorylation via phosphorylation of SOS1. Phosphorylates SOS1 at 'Ser-1134' and 'Ser-1161' that create YWHAB and YWHAE binding sites and which contribute to the negative regulation of MAPK1/3 phosphorylation. Phosphorylates EPHA2 at 'Ser-897', the RPS6KA-EPHA2 signaling pathway controls cell migration. Acts as a regulator of osteoblast differentiation by mediating phosphorylation of ATF4, thereby promoting ATF4 transactivation activity. This chain is Ribosomal protein S6 kinase alpha-3 (RPS6KA3), found in Homo sapiens (Human).